The chain runs to 239 residues: Phosducin-like protein 3 (239 aa).

An N-acetylmethionine modification is found at Met-1. The 149-residue stretch at 32 to 180 (EAEEEQRILQ…EGDIKAQFIG (149 aa)) folds into the Phosducin domain. 3 positions are modified to phosphoserine: Ser-43, Ser-234, and Ser-236. The interval 91–239 (FGEVLEISGK…MKRDSDSEGD (149 aa)) is thioredoxin fold.

Belongs to the phosducin family. In terms of assembly, interacts (via thioredoxin fold region) with KDR/VEGFR2 (via juxtamembrane domain). Forms ternary complexes with the chaperonin CCT complex and actin substrate, leading to inhibition of actin folding. Interacts with XIAP (via BIR 3 and RING domain). Interacts with HSP90AA1 and HSP90AB1. In terms of processing, N-terminal methionine acetylation destabilizes the protein.

It is found in the cytoplasm. The protein localises to the perinuclear region. The protein resides in the endoplasmic reticulum. Functionally, acts as a chaperone for the angiogenic VEGF receptor KDR/VEGFR2, increasing its abundance by inhibiting its ubiquitination and degradation. Inhibits the folding activity of the chaperonin-containing T-complex (CCT) which leads to inhibition of cytoskeletal actin folding. Acts as a chaperone during heat shock alongside HSP90 and HSP40/70 chaperone complexes. Modulates the activation of caspases during apoptosis. This is Phosducin-like protein 3 (PDCL3) from Pongo abelii (Sumatran orangutan).